The chain runs to 191 residues: Molybdenum cofactor guanylyltransferase (191 aa).

GTP is bound by residues 13–15, Lys-26, Asp-72, and Asp-102; that span reads LAG. Mg(2+) is bound at residue Asp-102.

It belongs to the MobA family. Monomer. Mg(2+) is required as a cofactor.

The protein localises to the cytoplasm. It catalyses the reaction Mo-molybdopterin + GTP + H(+) = Mo-molybdopterin guanine dinucleotide + diphosphate. Transfers a GMP moiety from GTP to Mo-molybdopterin (Mo-MPT) cofactor (Moco or molybdenum cofactor) to form Mo-molybdopterin guanine dinucleotide (Mo-MGD) cofactor. The sequence is that of Molybdenum cofactor guanylyltransferase from Pseudomonas entomophila (strain L48).